Here is a 121-residue protein sequence, read N- to C-terminus: uncharacterized protein (121 aa).

A run of 3 helical transmembrane segments spans residues 26-46 (YACS…AVAT), 57-77 (SIPL…SVLI), and 90-110 (SFCF…LLCV).

Its subcellular location is the membrane. This is an uncharacterized protein from Saccharomyces cerevisiae (strain ATCC 204508 / S288c) (Baker's yeast).